The primary structure comprises 909 residues: E3 ubiquitin-protein ligase HACE1 (909 aa).

The segment at Met1 to Val21 is N-terminal helix important for homodimerization. 7 ANK repeats span residues Leu23–Phe55, Val64–Tyr93, Ser97–Ile126, Glu130–Val159, Met163–Arg192, Ser196–Asp226, and Asn228–Pro253. The tract at residues Lys396–Gly433 is disordered. An HECT domain is found at Asn574–Ala909. Catalysis depends on Cys876, which acts as the Glycyl thioester intermediate.

In terms of assembly, homodimer. The homodimer is autoinhibited and stabilized by its N-terminal helix. Interacts with RAB1 (RAB1A, RAB1B or RAB1C), RAB4 (RAB4A or RAB4B) and RAB11 (RAB11A or RAB11B); in a GTP-dependent manner. Interacts with the 26S proteasomal complex through the 20S core proteasomal subunit. Interacts with RARB. In terms of processing, autoubiquitinated.

It localises to the golgi apparatus. The protein resides in the golgi stack membrane. The protein localises to the cytoplasm. Its subcellular location is the endoplasmic reticulum. The catalysed reaction is S-ubiquitinyl-[E2 ubiquitin-conjugating enzyme]-L-cysteine + [acceptor protein]-L-lysine = [E2 ubiquitin-conjugating enzyme]-L-cysteine + N(6)-ubiquitinyl-[acceptor protein]-L-lysine.. Its pathway is protein modification; protein ubiquitination. Its function is as follows. E3 ubiquitin-protein ligase involved in Golgi membrane fusion and regulation of small GTPases. Acts as a regulator of Golgi membrane dynamics during the cell cycle: recruited to Golgi membrane by Rab proteins and regulates postmitotic Golgi membrane fusion. Acts by mediating ubiquitination during mitotic Golgi disassembly, ubiquitination serving as a signal for Golgi reassembly later, after cell division. Specifically binds GTP-bound RAC1, mediating ubiquitination and subsequent degradation of active RAC1, thereby playing a role in host defense against pathogens. May also act as a transcription regulator via its interaction with RARB. In Bos taurus (Bovine), this protein is E3 ubiquitin-protein ligase HACE1 (HACE1).